A 207-amino-acid polypeptide reads, in one-letter code: Large ribosomal subunit protein bL25 (207 aa).

The protein belongs to the bacterial ribosomal protein bL25 family. CTC subfamily. Part of the 50S ribosomal subunit; part of the 5S rRNA/L5/L18/L25 subcomplex. Contacts the 5S rRNA. Binds to the 5S rRNA independently of L5 and L18.

In terms of biological role, this is one of the proteins that binds to the 5S RNA in the ribosome where it forms part of the central protuberance. The chain is Large ribosomal subunit protein bL25 from Brucella canis (strain ATCC 23365 / NCTC 10854 / RM-666).